Reading from the N-terminus, the 568-residue chain is 2-succinyl-5-enolpyruvyl-6-hydroxy-3-cyclohexene-1-carboxylate synthase (568 aa).

It belongs to the TPP enzyme family. MenD subfamily. In terms of assembly, homodimer. Mg(2+) serves as cofactor. Requires Mn(2+) as cofactor. It depends on thiamine diphosphate as a cofactor.

It catalyses the reaction isochorismate + 2-oxoglutarate + H(+) = 5-enolpyruvoyl-6-hydroxy-2-succinyl-cyclohex-3-ene-1-carboxylate + CO2. It functions in the pathway quinol/quinone metabolism; 1,4-dihydroxy-2-naphthoate biosynthesis; 1,4-dihydroxy-2-naphthoate from chorismate: step 2/7. It participates in cofactor biosynthesis; phylloquinone biosynthesis. Catalyzes the thiamine diphosphate-dependent decarboxylation of 2-oxoglutarate and the subsequent addition of the resulting succinic semialdehyde-thiamine pyrophosphate anion to isochorismate to yield 2-succinyl-5-enolpyruvyl-6-hydroxy-3-cyclohexene-1-carboxylate (SEPHCHC). In Synechococcus sp. (strain CC9902), this protein is 2-succinyl-5-enolpyruvyl-6-hydroxy-3-cyclohexene-1-carboxylate synthase.